The primary structure comprises 321 residues: Ribosomal RNA small subunit methyltransferase H (321 aa).

S-adenosyl-L-methionine is bound by residues 40 to 42 (GGH), Asp-60, Phe-84, Asp-106, and Gln-113.

Belongs to the methyltransferase superfamily. RsmH family.

It localises to the cytoplasm. The catalysed reaction is cytidine(1402) in 16S rRNA + S-adenosyl-L-methionine = N(4)-methylcytidine(1402) in 16S rRNA + S-adenosyl-L-homocysteine + H(+). In terms of biological role, specifically methylates the N4 position of cytidine in position 1402 (C1402) of 16S rRNA. This chain is Ribosomal RNA small subunit methyltransferase H, found in Histophilus somni (strain 2336) (Haemophilus somnus).